Reading from the N-terminus, the 257-residue chain is Aspartate/glutamate leucyltransferase (257 aa).

It belongs to the R-transferase family. Bpt subfamily.

The protein resides in the cytoplasm. It catalyses the reaction N-terminal L-glutamyl-[protein] + L-leucyl-tRNA(Leu) = N-terminal L-leucyl-L-glutamyl-[protein] + tRNA(Leu) + H(+). The enzyme catalyses N-terminal L-aspartyl-[protein] + L-leucyl-tRNA(Leu) = N-terminal L-leucyl-L-aspartyl-[protein] + tRNA(Leu) + H(+). Functions in the N-end rule pathway of protein degradation where it conjugates Leu from its aminoacyl-tRNA to the N-termini of proteins containing an N-terminal aspartate or glutamate. In Rhodopseudomonas palustris (strain BisB5), this protein is Aspartate/glutamate leucyltransferase.